Consider the following 203-residue polypeptide: Probable GTP-binding protein EngB (203 aa).

The region spanning 21 to 196 (GAPEIAFLGR…WKKIFEAAGT (176 aa)) is the EngB-type G domain. GTP is bound by residues 29–36 (GRSNVGKS), 55–59 (GRTQT), 79–82 (DLPG), 146–149 (TKID), and 175–177 (FSA). Residues serine 36 and threonine 57 each coordinate Mg(2+).

This sequence belongs to the TRAFAC class TrmE-Era-EngA-EngB-Septin-like GTPase superfamily. EngB GTPase family. Requires Mg(2+) as cofactor.

Functionally, necessary for normal cell division and for the maintenance of normal septation. The polypeptide is Probable GTP-binding protein EngB (Koribacter versatilis (strain Ellin345)).